The following is a 315-amino-acid chain: DNA-directed RNA polymerase subunit alpha (315 aa).

The interval 1–228 (MAQFQIECVE…DLFNPLKDIS (228 aa)) is alpha N-terminal domain (alpha-NTD). The tract at residues 238-315 (IPDDPTAQIP…LPQERSSKHS (78 aa)) is alpha C-terminal domain (alpha-CTD).

The protein belongs to the RNA polymerase alpha chain family. In terms of assembly, in cyanobacteria the RNAP catalytic core is composed of 2 alpha, 1 beta, 1 beta', 1 gamma and 1 omega subunit. When a sigma factor is associated with the core the holoenzyme is formed, which can initiate transcription.

It catalyses the reaction RNA(n) + a ribonucleoside 5'-triphosphate = RNA(n+1) + diphosphate. In terms of biological role, DNA-dependent RNA polymerase catalyzes the transcription of DNA into RNA using the four ribonucleoside triphosphates as substrates. The protein is DNA-directed RNA polymerase subunit alpha of Trichormus variabilis (strain ATCC 29413 / PCC 7937) (Anabaena variabilis).